A 212-amino-acid polypeptide reads, in one-letter code: Uridine kinase (212 aa).

12–19 contributes to the ATP binding site; sequence GGSGGGKT.

This sequence belongs to the uridine kinase family.

The protein localises to the cytoplasm. It catalyses the reaction uridine + ATP = UMP + ADP + H(+). The enzyme catalyses cytidine + ATP = CMP + ADP + H(+). The protein operates within pyrimidine metabolism; CTP biosynthesis via salvage pathway; CTP from cytidine: step 1/3. It participates in pyrimidine metabolism; UMP biosynthesis via salvage pathway; UMP from uridine: step 1/1. The chain is Uridine kinase from Streptococcus pneumoniae serotype 19F (strain G54).